Reading from the N-terminus, the 581-residue chain is Multidrug and toxin extrusion protein 2 (581 aa).

Topologically, residues 1-33 (MDSLQDTVPLDHGGCCPALSRLVPRGFGTEMWT) are cytoplasmic. A helical transmembrane segment spans residues 34–54 (LFALSGPLFLFQVLTFMIYIV). Over 55–66 (STVFCGHLGKVE) the chain is Extracellular. The helical transmembrane segment at 67-87 (LASVTLAVAFVNVCGVSVGVG) threads the bilayer. Topologically, residues 88 to 119 (LSSACDTLMSQSFGSPNKKHVGVILQRGALVL) are cytoplasmic. The helical transmembrane segment at 120-140 (LLCCLPCWALFLNTQHILLLF) threads the bilayer. Topologically, residues 141–153 (RQDPEVSRLTQDY) are extracellular. Residues 154–174 (VMIFIPGLPVIFLYNLLAKYL) traverse the membrane as a helical segment. Over 175–183 (QNQKITWPQ) the chain is Cytoplasmic. A helical membrane pass occupies residues 184-204 (VLSGVVGNCVNGVANYALVSV). Residues 205 to 212 (LNLGVRGS) lie on the Extracellular side of the membrane. The chain crosses the membrane as a helical span at residues 213 to 233 (AYANIISQFAQTVFLLLYIVL). The Cytoplasmic segment spans residues 234 to 253 (KKLHLETWAGWSSQCLQDWG). A helical membrane pass occupies residues 254 to 273 (PFFSLAVPSMLMICVEWWAY). At 274–317 (EIGSFLMGLLSVVDLSAQAVIYEVATVTYMRHSHHLAYTAHVAR) the chain is on the extracellular side. Residues 318 to 338 (IPLGLSIGVCVRVGMALGAAD) form a helical membrane-spanning segment. The Cytoplasmic segment spans residues 339–346 (TVQAKRSA). Residues 347–367 (VSGVLSIVGISLVLGTLISIL) traverse the membrane as a helical segment. The Extracellular portion of the chain corresponds to 368 to 380 (KNQLGHIFTNDED). Residues 381–401 (VIALVSQVLPVYSVFHVFEAI) form a helical membrane-spanning segment. The Cytoplasmic portion of the chain corresponds to 402-420 (CCVYGGVLRGTGKQAFGAA). A helical transmembrane segment spans residues 421–441 (VNAITYYIIGLPLGILLTFVV). The Extracellular portion of the chain corresponds to 442 to 444 (RMR). Residues 445 to 465 (IMGLWLGMLACVFLATAAFVA) traverse the membrane as a helical segment. Residues 466 to 557 (YTARLDWKLA…LSVKQLVIRR (92 aa)) are Cytoplasmic-facing. Positions 481-513 (KHSGQQQQQQRAESTATRSGPEKAVLSSVATGS) are disordered. The chain crosses the membrane as a helical span at residues 558–578 (GAALGAASATLMVGLTVRILA). Topologically, residues 579–581 (TRH) are extracellular.

This sequence belongs to the multi antimicrobial extrusion (MATE) (TC 2.A.66.1) family.

The protein localises to the cell membrane. Its subcellular location is the apical cell membrane. It carries out the reaction thiamine(out) + H(+)(in) = thiamine(in) + H(+)(out). The catalysed reaction is estrone 3-sulfate(in) + H(+)(out) = estrone 3-sulfate(out) + H(+)(in). It catalyses the reaction creatinine(in) + H(+)(out) = creatinine(out) + H(+)(in). Its function is as follows. Multidrug efflux pump that functions as a H(+)/organic cation antiporter. Mediates the efflux of cationic compounds, such as the model cations, tetraethylammonium (TEA) and 1-methyl-4-phenylpyridinium (MPP+), the platinum-based drug oxaliplatin or weak bases that are positively charged at physiological pH, cimetidine or the antidiabetic drug metformin. Mediates the efflux of the endogenous compounds creatinine, thiamine and estrone-3-sulfate. Plays a physiological role in the excretion of drugs, toxins and endogenous metabolites through the kidney. This chain is Multidrug and toxin extrusion protein 2 (SLC47A2), found in Pongo abelii (Sumatran orangutan).